A 61-amino-acid chain; its full sequence is Putative antitoxin VapB13 (61 aa).

It belongs to the UPF0165 family.

Its function is as follows. Possibly the antitoxin component of a type II toxin-antitoxin (TA) system. Its cognate toxin is VapC13 (Potential). This is Putative antitoxin VapB13 (vapB13) from Archaeoglobus fulgidus (strain ATCC 49558 / DSM 4304 / JCM 9628 / NBRC 100126 / VC-16).